The following is a 196-amino-acid chain: 3-isopropylmalate dehydratase small subunit (196 aa).

It belongs to the LeuD family. LeuD type 1 subfamily. As to quaternary structure, heterodimer of LeuC and LeuD.

It catalyses the reaction (2R,3S)-3-isopropylmalate = (2S)-2-isopropylmalate. Its pathway is amino-acid biosynthesis; L-leucine biosynthesis; L-leucine from 3-methyl-2-oxobutanoate: step 2/4. In terms of biological role, catalyzes the isomerization between 2-isopropylmalate and 3-isopropylmalate, via the formation of 2-isopropylmaleate. The chain is 3-isopropylmalate dehydratase small subunit from Corynebacterium aurimucosum (strain ATCC 700975 / DSM 44827 / CIP 107346 / CN-1) (Corynebacterium nigricans).